Here is a 558-residue protein sequence, read N- to C-terminus: Cytochrome P450 monooxygenase grgG (558 aa).

A helical membrane pass occupies residues 11-31; the sequence is PASFIYFPLLILVGHALIFIL. Position 470 (C470) interacts with heme.

The protein belongs to the cytochrome P450 family. Heme is required as a cofactor.

Its subcellular location is the membrane. Its pathway is secondary metabolite biosynthesis. In terms of biological role, cytochrome P450 monooxygenase; part of the gene cluster that mediates the biosynthesis of gregatin A, a fungal polyketide featuring an alkylated furanone core. The PKS grgA synthesizes C11 and C4 polyketide chains in the presence and absence of the trans-enoyl reductase grgB, respectively. The polyketide transferase grgF is then responsible for the fusion of the two carbon chains to produce the furanone skeleton of gregatin A. Next, the cytochrome P450 monooxygenase grgG performs the oxidative cyclization to furnish the gregatin scaffold and leads to the formation of desmethylgregatin A. In this transformation, grgG initially abstracts a hydrogen atom from C-8 to generate a substrate radical, from which one electron is transferred to the iron-heme center to yield a carbocationic species. Heterocyclization along with double-bond isomerizations provides desmethylgregatin A with the furanone ring. Alternatively, grgG might provide hydroxylation at the C-8 radical, which is followed by dehydration to give the cyclized desmethylgregatin A. Finally, the O-methyltransferase grgD methylates the carboxyl group of desmethylgregatin A to provide gregatin A. This chain is Cytochrome P450 monooxygenase grgG (grgG), found in Penicillium sp.